A 335-amino-acid chain; its full sequence is Putative zinc metalloprotease CPE1693 (335 aa).

A Zn(2+)-binding site is contributed by His-17. Glu-18 is a catalytic residue. Residue His-21 coordinates Zn(2+). The next 3 helical transmembrane spans lie at 88-110, 262-284, and 312-334; these read ILVM…IGLA, LLWF…FPAL, and TVGF…IFPI. The region spanning 96–174 is the PDZ domain; it reads FMNYVLALII…PVELEIKRGN (79 aa).

The protein belongs to the peptidase M50B family. Zn(2+) serves as cofactor.

The protein resides in the cell membrane. The chain is Putative zinc metalloprotease CPE1693 from Clostridium perfringens (strain 13 / Type A).